A 326-amino-acid chain; its full sequence is Eukaryotic translation initiation factor 3 subunit I (326 aa).

5 WD repeats span residues 8 to 47 (GHER…RLGT), 50 to 89 (GHQG…VIAS), 145 to 184 (MTES…KVVD), 188 to 227 (DHSA…CLKT), and 285 to 326 (GHFG…NIFE).

Belongs to the eIF-3 subunit I family. As to quaternary structure, component of the eukaryotic translation initiation factor 3 (eIF-3) complex. The eIF-3 complex interacts with pix.

The protein localises to the cytoplasm. Functionally, component of the eukaryotic translation initiation factor 3 (eIF-3) complex, which is involved in protein synthesis of a specialized repertoire of mRNAs and, together with other initiation factors, stimulates binding of mRNA and methionyl-tRNAi to the 40S ribosome. The eIF-3 complex specifically targets and initiates translation of a subset of mRNAs involved in cell proliferation. The protein is Eukaryotic translation initiation factor 3 subunit I of Drosophila erecta (Fruit fly).